The following is a 424-amino-acid chain: MRILGLITEYNPFHNGHLHHLQESKKISKSTHTVAVMSGHFLQRGEPALIHKWARAQMAVDAGVDLVLELPTLYACASAEFFSHGAVSILNQMGVVDALCFGSELGHIEALKQVATVLINSPESFEISLKKYLQEGIAFPKARSKALIDHFSLEDLSSYGMTTEKMIALLKNPNNILGIEYLKALALTKSKIQPYTITRKAAAYHSTELTLNITSATAIRNHLFNTGNLNEMIHAIPPSTYEILSTCFNKDGGPIFANDLGLTILSMIRRMTPQEIAKILDVGEGLENRIFQCANQSNRLDEFCQCVKSKRYTLTRIQRICMRILLDIQFPLMNQATHASTGLYGRILAFNDRGREIIKLAQKKSSFPFITKINQYTPPNSFTKNLLDLDIRATNLYALAVKNNAFSKGEQDHLTSPYYRKELT.

Residues 7–20 (ITEYNPFHNGHLHH), Gly102, Asn174, and Arg199 contribute to the ATP site.

It belongs to the TmcAL family.

It is found in the cytoplasm. It carries out the reaction cytidine(34) in elongator tRNA(Met) + acetate + ATP = N(4)-acetylcytidine(34) in elongator tRNA(Met) + AMP + diphosphate. Its function is as follows. Catalyzes the formation of N(4)-acetylcytidine (ac(4)C) at the wobble position of elongator tRNA(Met), using acetate and ATP as substrates. First activates an acetate ion to form acetyladenylate (Ac-AMP) and then transfers the acetyl group to tRNA to form ac(4)C34. This Alkaliphilus metalliredigens (strain QYMF) protein is tRNA(Met) cytidine acetate ligase.